The following is a 673-amino-acid chain: DNA ligase (673 aa).

Residues Asp-36–Asp-40, Ser-85–Leu-86, and Glu-118 contribute to the NAD(+) site. Lys-120 functions as the N6-AMP-lysine intermediate in the catalytic mechanism. The NAD(+) site is built by Arg-141, Glu-178, Lys-295, and Lys-319. 4 residues coordinate Zn(2+): Cys-413, Cys-416, Cys-431, and Cys-437. The region spanning Val-596–Ala-673 is the BRCT domain.

Belongs to the NAD-dependent DNA ligase family. LigA subfamily. Mg(2+) serves as cofactor. The cofactor is Mn(2+).

It catalyses the reaction NAD(+) + (deoxyribonucleotide)n-3'-hydroxyl + 5'-phospho-(deoxyribonucleotide)m = (deoxyribonucleotide)n+m + AMP + beta-nicotinamide D-nucleotide.. DNA ligase that catalyzes the formation of phosphodiester linkages between 5'-phosphoryl and 3'-hydroxyl groups in double-stranded DNA using NAD as a coenzyme and as the energy source for the reaction. It is essential for DNA replication and repair of damaged DNA. The sequence is that of DNA ligase from Histophilus somni (strain 129Pt) (Haemophilus somnus).